Here is a 394-residue protein sequence, read N- to C-terminus: Trans-enoyl reductase fumoC (394 aa).

NADP(+) is bound at residue 62–65 (VDGK). 152-159 (ASLASVGM) is a binding site for substrate. NADP(+)-binding positions include 224-227 (SSSS), tyrosine 242, and 289-290 (LD). Position 309-313 (309-313 (TLTQF)) interacts with substrate. 378–379 (VK) contributes to the NADP(+) binding site.

The protein belongs to the zinc-containing alcohol dehydrogenase family. Monomer.

It participates in secondary metabolite biosynthesis. Functionally, trans-enoyl reductase; part of the gene cluster that mediates the biosynthesis of fumosorinone, a 2-pyridone alkaloid that acts as an inhibitor of protein tyrosine phosphatase 1B which is implicated asa negative regulator of insulin receptor signaling and a potential drug target for the treatment of type II diabetes and other associated metabolic syndromes. The polyketide-amino acid backbone of fumosorinone is first assembled by the PKS-NRPS hybrid fumoS. The PKS modules condense one acetyl-CoA starter unit with 7 malonyl-CoA units, programmed C-methylations occurring after the first 3 and the sixth extensions, and cycles of full reduction occurring after the first 2 extensions. Because fumoS lacks a designated enoyl reductase (ER) domain, the required activity is provided the enoyl reductase fumoC. Upon formation of the polyketide backbone on the thiotemplate, the polyketide is transferred to the NRPS module and linked to tyrosine to produce the acyltetramic acid intermediate called prefumosorinone A. The cytochrome P450 monooxygenase fumoA then probably catalyzes an unprecedented oxidative ring expansion of prefumosorinone A to form prefumosorinone B which contains the 2-pyridone core of fumosorinone. The cytochrome P450 monooxygenase fumoB might hydroxylate the nitrogen of prefumosorinone B, but not the acyltetramic acid prefumosorinone A, to form fumosorinone. The protein is Trans-enoyl reductase fumoC of Cordyceps fumosorosea (strain ARSEF 2679) (Isaria fumosorosea).